Reading from the N-terminus, the 233-residue chain is 2-C-methyl-D-erythritol 4-phosphate cytidylyltransferase (233 aa).

It belongs to the IspD/TarI cytidylyltransferase family. IspD subfamily.

It catalyses the reaction 2-C-methyl-D-erythritol 4-phosphate + CTP + H(+) = 4-CDP-2-C-methyl-D-erythritol + diphosphate. It participates in isoprenoid biosynthesis; isopentenyl diphosphate biosynthesis via DXP pathway; isopentenyl diphosphate from 1-deoxy-D-xylulose 5-phosphate: step 2/6. Its function is as follows. Catalyzes the formation of 4-diphosphocytidyl-2-C-methyl-D-erythritol from CTP and 2-C-methyl-D-erythritol 4-phosphate (MEP). The sequence is that of 2-C-methyl-D-erythritol 4-phosphate cytidylyltransferase from Geotalea uraniireducens (strain Rf4) (Geobacter uraniireducens).